A 271-amino-acid chain; its full sequence is Pyridoxine kinase (271 aa).

Residue N141 coordinates ATP. E144 provides a ligand contact to Mg(2+). ATP-binding positions include 178–182, D190, I206, G215, and K240; that span reads TGGGK.

Belongs to the ThiD family. As to quaternary structure, homodimer.

The catalysed reaction is pyridoxal + ATP = pyridoxal 5'-phosphate + ADP + H(+). Phosphorylates B6 vitamers; functions in a salvage pathway. Uses pyridoxal, pyridoxine, and pyridoxamine as substrates. Can also use hydroxymethylpyrimidine (HMP) as substrate. The polypeptide is Pyridoxine kinase (pdxK) (Bacillus subtilis (strain 168)).